The chain runs to 227 residues: Isopentenyl-diphosphate Delta-isomerase 1 (227 aa).

K36 contacts substrate. H40 and H51 together coordinate Mg(2+). In terms of domain architecture, Nudix hydrolase spans 49 to 199; it reads LLHRAFSVFL…EVKLTPWFKI (151 aa). Residues R70 and K74 each contribute to the substrate site. The active site involves C86. Substrate is bound at residue S87. Positions 146 and 148 each coordinate Mg(2+). Residue E148 is part of the active site. At K176 the chain carries N6-acetyllysine. The short motif at 225-227 is the Microbody targeting signal element; the sequence is HRM.

It belongs to the IPP isomerase type 1 family. In terms of assembly, monomer. Requires Mg(2+) as cofactor.

The protein localises to the peroxisome. It carries out the reaction isopentenyl diphosphate = dimethylallyl diphosphate. Its pathway is isoprenoid biosynthesis; dimethylallyl diphosphate biosynthesis; dimethylallyl diphosphate from isopentenyl diphosphate: step 1/1. Its function is as follows. Catalyzes the 1,3-allylic rearrangement of the homoallylic substrate isopentenyl (IPP) to its highly electrophilic allylic isomer, dimethylallyl diphosphate (DMAPP). The chain is Isopentenyl-diphosphate Delta-isomerase 1 (IDI1) from Mesocricetus auratus (Golden hamster).